The primary structure comprises 213 residues: Kynurenine formamidase (213 aa).

Tryptophan 18 provides a ligand contact to substrate. Zn(2+)-binding residues include histidine 48, histidine 52, and aspartate 54. Histidine 58 acts as the Proton donor/acceptor in catalysis. The Zn(2+) site is built by histidine 160 and glutamate 172.

This sequence belongs to the Cyclase 1 superfamily. KynB family. In terms of assembly, homodimer. Zn(2+) serves as cofactor.

The catalysed reaction is N-formyl-L-kynurenine + H2O = L-kynurenine + formate + H(+). The protein operates within amino-acid degradation; L-tryptophan degradation via kynurenine pathway; L-kynurenine from L-tryptophan: step 2/2. Functionally, catalyzes the hydrolysis of N-formyl-L-kynurenine to L-kynurenine, the second step in the kynurenine pathway of tryptophan degradation. This chain is Kynurenine formamidase, found in Burkholderia ambifaria (strain MC40-6).